We begin with the raw amino-acid sequence, 272 residues long: MPFVIAYPVIDPVLLSIGPLPIRWYALAYIAGLVIGWAYARHLVARASFWGGRVRPDLGVIDDLLVYTALGVILGGRLGYVVFYNPAFYLSHPLDVFKLWQGGMSFHGGLVGAGVGVMLLARRRGLPTLALGDIVSAVAPIGLFLGRIANFIKPELWGRPTDVPWAMVFPGAGDLPRHPSQLYEAAAEGALLFLLLFVAVRLGALKRSGLVTGLFAIGYGCARILCEFFREPDPQLGFLFGGATMGMLLSLPLIAAGLALVAFAYRREAVPA.

4 helical membrane passes run W24–V44, L64–Y84, L99–L119, and G125–L145. Residue R147 coordinates a 1,2-diacyl-sn-glycero-3-phospho-(1'-sn-glycerol). Helical transmembrane passes span A185 to L205, G209 to F229, and M245 to Y265.

Belongs to the Lgt family.

The protein resides in the cell inner membrane. The catalysed reaction is L-cysteinyl-[prolipoprotein] + a 1,2-diacyl-sn-glycero-3-phospho-(1'-sn-glycerol) = an S-1,2-diacyl-sn-glyceryl-L-cysteinyl-[prolipoprotein] + sn-glycerol 1-phosphate + H(+). Its pathway is protein modification; lipoprotein biosynthesis (diacylglyceryl transfer). Catalyzes the transfer of the diacylglyceryl group from phosphatidylglycerol to the sulfhydryl group of the N-terminal cysteine of a prolipoprotein, the first step in the formation of mature lipoproteins. This is Phosphatidylglycerol--prolipoprotein diacylglyceryl transferase from Methylocella silvestris (strain DSM 15510 / CIP 108128 / LMG 27833 / NCIMB 13906 / BL2).